Here is a 572-residue protein sequence, read N- to C-terminus: 2-succinyl-5-enolpyruvyl-6-hydroxy-3-cyclohexene-1-carboxylate synthase (572 aa).

This sequence belongs to the TPP enzyme family. MenD subfamily. As to quaternary structure, homodimer. Requires Mg(2+) as cofactor. It depends on Mn(2+) as a cofactor. The cofactor is thiamine diphosphate.

The catalysed reaction is isochorismate + 2-oxoglutarate + H(+) = 5-enolpyruvoyl-6-hydroxy-2-succinyl-cyclohex-3-ene-1-carboxylate + CO2. The protein operates within quinol/quinone metabolism; 1,4-dihydroxy-2-naphthoate biosynthesis; 1,4-dihydroxy-2-naphthoate from chorismate: step 2/7. Its pathway is quinol/quinone metabolism; menaquinone biosynthesis. In terms of biological role, catalyzes the thiamine diphosphate-dependent decarboxylation of 2-oxoglutarate and the subsequent addition of the resulting succinic semialdehyde-thiamine pyrophosphate anion to isochorismate to yield 2-succinyl-5-enolpyruvyl-6-hydroxy-3-cyclohexene-1-carboxylate (SEPHCHC). The protein is 2-succinyl-5-enolpyruvyl-6-hydroxy-3-cyclohexene-1-carboxylate synthase of Shewanella amazonensis (strain ATCC BAA-1098 / SB2B).